Reading from the N-terminus, the 340-residue chain is Tetraacyldisaccharide 4'-kinase (340 aa).

ATP is bound at residue 51-58 (HMGGAGKT).

The protein belongs to the LpxK family.

It carries out the reaction a lipid A disaccharide + ATP = a lipid IVA + ADP + H(+). Its pathway is glycolipid biosynthesis; lipid IV(A) biosynthesis; lipid IV(A) from (3R)-3-hydroxytetradecanoyl-[acyl-carrier-protein] and UDP-N-acetyl-alpha-D-glucosamine: step 6/6. Its function is as follows. Transfers the gamma-phosphate of ATP to the 4'-position of a tetraacyldisaccharide 1-phosphate intermediate (termed DS-1-P) to form tetraacyldisaccharide 1,4'-bis-phosphate (lipid IVA). The sequence is that of Tetraacyldisaccharide 4'-kinase from Rhodopseudomonas palustris (strain TIE-1).